Reading from the N-terminus, the 273-residue chain is MTNRQWETLREYDEIKYEFYEGIAKVTINRPEVRNAFTPKTVSEMIDAFSRARDDQNVSVIVLTGEGDLAFCSGGDQKKRGHGGYVGEDQIPRLNVLDLQRLIRIIPKPVIAMVKGYAVGGGNVLNVVCDLTIAADNAIFGQTGPKVGSFDAGYGSGYLARIVGHKKAREIWYLCRQYNAQEALDMGLVNTVVPLEKVEDETVQWCKEIMKHSPTALRFLKAAMNADTDGLAGLQQMAGDATLLYYTTDEAKEGRDAFKEKRDPDFDQFPKFP.

Residues arginine 34, 73 to 77 (SGGDQ), tyrosine 85, 117 to 121 (YAVGG), threonine 143, serine 149, tyrosine 246, and lysine 261 contribute to the substrate site. Hydrogencarbonate is bound at residue 142 to 144 (QTG). Residues 254–265 (GRDAFKEKRDPD) show a composition bias toward basic and acidic residues. The disordered stretch occupies residues 254–273 (GRDAFKEKRDPDFDQFPKFP).

The protein belongs to the enoyl-CoA hydratase/isomerase family. MenB subfamily. Hydrogencarbonate serves as cofactor.

The enzyme catalyses 2-succinylbenzoyl-CoA + H(+) = 1,4-dihydroxy-2-naphthoyl-CoA + H2O. It functions in the pathway quinol/quinone metabolism; 1,4-dihydroxy-2-naphthoate biosynthesis; 1,4-dihydroxy-2-naphthoate from chorismate: step 6/7. Its pathway is quinol/quinone metabolism; menaquinone biosynthesis. Its function is as follows. Converts o-succinylbenzoyl-CoA (OSB-CoA) to 1,4-dihydroxy-2-naphthoyl-CoA (DHNA-CoA). The protein is 1,4-dihydroxy-2-naphthoyl-CoA synthase of Staphylococcus aureus (strain MSSA476).